Here is a 1019-residue protein sequence, read N- to C-terminus: Probable inorganic carbon transporter subunit DabA 1 (1019 aa).

Zn(2+)-binding residues include cysteine 491 and aspartate 493. The segment at 624–643 is disordered; that stretch reads VPTRLHSPRDEGSAAGGEGQ. Residues histidine 676 and cysteine 691 each contribute to the Zn(2+) site.

This sequence belongs to the inorganic carbon transporter (TC 9.A.2) DabA family. In terms of assembly, forms a complex with DabB. It depends on Zn(2+) as a cofactor.

Its subcellular location is the cell inner membrane. Part of an energy-coupled inorganic carbon pump. This chain is Probable inorganic carbon transporter subunit DabA 1, found in Sorangium cellulosum (strain So ce56) (Polyangium cellulosum (strain So ce56)).